The primary structure comprises 632 residues: Threonine--tRNA ligase (632 aa).

The 61-residue stretch at 1 to 61 (MPIVTLPDGS…EHDAEVSILT (61 aa)) folds into the TGS domain. The interval 242–533 (DHRKLARKLD…LIEHYAGSMP (292 aa)) is catalytic. Zn(2+)-binding residues include Cys333, His384, and His510.

Belongs to the class-II aminoacyl-tRNA synthetase family. In terms of assembly, homodimer. The cofactor is Zn(2+).

Its subcellular location is the cytoplasm. The enzyme catalyses tRNA(Thr) + L-threonine + ATP = L-threonyl-tRNA(Thr) + AMP + diphosphate + H(+). Its function is as follows. Catalyzes the attachment of threonine to tRNA(Thr) in a two-step reaction: L-threonine is first activated by ATP to form Thr-AMP and then transferred to the acceptor end of tRNA(Thr). Also edits incorrectly charged L-seryl-tRNA(Thr). The polypeptide is Threonine--tRNA ligase (Chromohalobacter salexigens (strain ATCC BAA-138 / DSM 3043 / CIP 106854 / NCIMB 13768 / 1H11)).